The following is a 154-amino-acid chain: MGLSDGEWQLVLNVWGKVEGDLSGHGQEVLIRLFKGHPETLEKFDKFKHLKAEDEMRASEELKKHGTTVLTALGGILKKKGQHAAELAPLAQSHATKHKIPVKYLEFISEAIIQVLQSKHPGDFGADAQGAMSKALELFRNDIAAKYKELGFQG.

Residues 2–148 (GLSDGEWQLV…FRNDIAAKYK (147 aa)) enclose the Globin domain. S4 is subject to Phosphoserine. Residue H65 participates in nitrite binding. Position 65 (H65) interacts with O2. Phosphothreonine is present on T68. Residue H94 coordinates heme b.

It belongs to the globin family. As to quaternary structure, monomeric.

It is found in the cytoplasm. Its subcellular location is the sarcoplasm. The catalysed reaction is Fe(III)-heme b-[protein] + nitric oxide + H2O = Fe(II)-heme b-[protein] + nitrite + 2 H(+). It carries out the reaction H2O2 + AH2 = A + 2 H2O. In terms of biological role, monomeric heme protein which primary function is to store oxygen and facilitate its diffusion within muscle tissues. Reversibly binds oxygen through a pentacoordinated heme iron and enables its timely and efficient release as needed during periods of heightened demand. Depending on the oxidative conditions of tissues and cells, and in addition to its ability to bind oxygen, it also has a nitrite reductase activity whereby it regulates the production of bioactive nitric oxide. Under stress conditions, like hypoxia and anoxia, it also protects cells against reactive oxygen species thanks to its pseudoperoxidase activity. The sequence is that of Myoglobin (MB) from Proechimys guairae (Guaira spiny rat).